The sequence spans 93 residues: Cell division protein FtsB (93 aa).

Residues 1–3 lie on the Cytoplasmic side of the membrane; sequence MRV. The helical transmembrane segment at 4–21 threads the bilayer; it reads TLVVLLALFLALQYRLWF. The Periplasmic portion of the chain corresponds to 22 to 93; that stretch reads GKNSLPDYWR…FFRLVPDRNP (72 aa). Positions 28–75 form a coiled coil; sequence DYWRLQQEVSNQKNTNENLERRNQLIYADIEDLREGEDALEERARNEL.

The protein belongs to the FtsB family. Part of a complex composed of FtsB, FtsL and FtsQ.

It is found in the cell inner membrane. Functionally, essential cell division protein. May link together the upstream cell division proteins, which are predominantly cytoplasmic, with the downstream cell division proteins, which are predominantly periplasmic. The sequence is that of Cell division protein FtsB from Idiomarina loihiensis (strain ATCC BAA-735 / DSM 15497 / L2-TR).